Consider the following 304-residue polypeptide: Non-specific ribonucleoside hydrolase RihC (304 aa).

Histidine 233 is a catalytic residue.

Belongs to the IUNH family. RihC subfamily.

Hydrolyzes both purine and pyrimidine ribonucleosides with a broad-substrate specificity. This chain is Non-specific ribonucleoside hydrolase RihC, found in Escherichia coli (strain SMS-3-5 / SECEC).